The sequence spans 176 residues: HTH-type transcriptional regulator DctR (176 aa).

The HTH luxR-type domain maps to V109–Y174. A DNA-binding region (H-T-H motif) is located at residues T133–H152.

May act as a transcriptional regulator of dctA. This is HTH-type transcriptional regulator DctR (dctR) from Shigella flexneri.